Here is a 292-residue protein sequence, read N- to C-terminus: ATP synthase gamma chain (292 aa).

The protein belongs to the ATPase gamma chain family. In terms of assembly, F-type ATPases have 2 components, CF(1) - the catalytic core - and CF(0) - the membrane proton channel. CF(1) has five subunits: alpha(3), beta(3), gamma(1), delta(1), epsilon(1). CF(0) has three main subunits: a, b and c.

The protein localises to the cell inner membrane. Functionally, produces ATP from ADP in the presence of a proton gradient across the membrane. The gamma chain is believed to be important in regulating ATPase activity and the flow of protons through the CF(0) complex. This Chlorobaculum tepidum (strain ATCC 49652 / DSM 12025 / NBRC 103806 / TLS) (Chlorobium tepidum) protein is ATP synthase gamma chain.